Here is a 389-residue protein sequence, read N- to C-terminus: Large envelope protein (389 aa).

The residue at position 1 (Met-1) is an N-acetylmethionine. Residue Gly-2 is the site of N-myristoyl glycine; by host attachment. Residues 2 to 108 (GQNLSVTNPL…PPLRDTHPQA (107 aa)) form a pre-S1 region. The segment at 2–163 (GQNLSVTNPL…FLKTGDPALN (162 aa)) is pre-S. At 2 to 170 (GQNLSVTNPL…ALNMESISSG (169 aa)) the chain is on the virion surface; in external conformation side. Residues 2 to 242 (GQNLSVTNPL…PGYRWMCLRR (241 aa)) lie on the Intravirion; in internal conformation side of the membrane. Residues 78–105 (PAVPPPASTNRQSGRRPTPISPPLRDTH) form a disordered region. A pre-S2 region spans residues 109 to 163 (MQWNSTVFHQALQDPRVRGLYFPAGGSSSGTVSPVPTTASPISSTFLKTGDPALN). The helical transmembrane segment at 171–191 (FLGPLLVLQAGFFLLTKILTI) threads the bilayer. Residues 192–242 (PQSLDSWWTSLNFLGGAPVCPGQNSQSLTSNHSPTSCPPICPGYRWMCLRR) are Intravirion; in external conformation-facing. Residues 243 to 263 (FIIFLFILLLCLIFLLVLLDY) traverse the membrane as a helical segment. The Virion surface portion of the chain corresponds to 264 to 337 (RGMLPVCPLL…WASVRFSWLN (74 aa)). N-linked (GlcNAc...) asparagine; by host glycosylation is present at Asn-309. The chain crosses the membrane as a helical span at residues 338-358 (LLVPFVQWFAGLSPTVWLSVI). The Intravirion portion of the chain corresponds to 359–364 (WMIWYW). A helical transmembrane segment spans residues 365–387 (GPSLYNILSPFIPLLPIFFCLWA). Residues 388 to 389 (YI) are Virion surface-facing.

It belongs to the orthohepadnavirus major surface antigen family. In terms of assembly, in its internal form (Li-HBsAg), interacts with the capsid protein and with the isoform S. Interacts with host chaperone CANX. As to quaternary structure, associates with host chaperone CANX through its pre-S2 N glycan; this association may be essential for isoform M proper secretion. Interacts with isoform L. Interacts with the antigens of satellite virus HDV (HDVAgs); this interaction is required for encapsidation of HDV genomic RNA. Isoform M is N-terminally acetylated by host at a ratio of 90%, and N-glycosylated by host at the pre-S2 region. Post-translationally, myristoylated.

It is found in the virion membrane. In terms of biological role, the large envelope protein exists in two topological conformations, one which is termed 'external' or Le-HBsAg and the other 'internal' or Li-HBsAg. In its external conformation the protein attaches the virus to cell receptors and thereby initiating infection. This interaction determines the species specificity and liver tropism. This attachment induces virion internalization predominantly through caveolin-mediated endocytosis. The large envelope protein also assures fusion between virion membrane and endosomal membrane. In its internal conformation the protein plays a role in virion morphogenesis and mediates the contact with the nucleocapsid like a matrix protein. Functionally, the middle envelope protein plays an important role in the budding of the virion. It is involved in the induction of budding in a nucleocapsid independent way. In this process the majority of envelope proteins bud to form subviral lipoprotein particles of 22 nm of diameter that do not contain a nucleocapsid. This is Large envelope protein from Pongo pygmaeus (Bornean orangutan).